We begin with the raw amino-acid sequence, 413 residues long: Probable tRNA sulfurtransferase (413 aa).

Residues 61–171 (TRVLDRVTRV…EDGTYIFTEK (111 aa)) enclose the THUMP domain. Residues 189–190 (ML), 214–215 (HF), R275, G297, and Q306 contribute to the ATP site.

This sequence belongs to the ThiI family.

The protein resides in the cytoplasm. The catalysed reaction is [ThiI sulfur-carrier protein]-S-sulfanyl-L-cysteine + a uridine in tRNA + 2 reduced [2Fe-2S]-[ferredoxin] + ATP + H(+) = [ThiI sulfur-carrier protein]-L-cysteine + a 4-thiouridine in tRNA + 2 oxidized [2Fe-2S]-[ferredoxin] + AMP + diphosphate. The enzyme catalyses [ThiS sulfur-carrier protein]-C-terminal Gly-Gly-AMP + S-sulfanyl-L-cysteinyl-[cysteine desulfurase] + AH2 = [ThiS sulfur-carrier protein]-C-terminal-Gly-aminoethanethioate + L-cysteinyl-[cysteine desulfurase] + A + AMP + 2 H(+). Its pathway is cofactor biosynthesis; thiamine diphosphate biosynthesis. In terms of biological role, catalyzes the ATP-dependent transfer of a sulfur to tRNA to produce 4-thiouridine in position 8 of tRNAs, which functions as a near-UV photosensor. Also catalyzes the transfer of sulfur to the sulfur carrier protein ThiS, forming ThiS-thiocarboxylate. This is a step in the synthesis of thiazole, in the thiamine biosynthesis pathway. The sulfur is donated as persulfide by IscS. The protein is Probable tRNA sulfurtransferase of Natranaerobius thermophilus (strain ATCC BAA-1301 / DSM 18059 / JW/NM-WN-LF).